Reading from the N-terminus, the 210-residue chain is Fibroblast growth factor 21 (210 aa).

A signal peptide spans 1-28; sequence MEWMRSRVGTLGLWVRLLLAVFLLGVYQ. Residues 144 to 210 form a disordered region; it reads PLRLPQKDSP…LQGRSPSYAS (67 aa).

This sequence belongs to the heparin-binding growth factors family. In terms of assembly, interacts (via C-terminus) with KLB; this interaction is direct. Interacts with FGFR4. Most abundantly expressed in the liver, also expressed in the thymus at lower levels. Expressed in skeletal muscle (at protein level). Secreted in plasma (at protein level).

The protein localises to the secreted. Stimulates glucose uptake in differentiated adipocytes via the induction of glucose transporter SLC2A1/GLUT1 expression (but not SLC2A4/GLUT4 expression). Activity probably requires the presence of KLB. Regulates systemic glucose homeostasis and insulin sensitivity. This Mus musculus (Mouse) protein is Fibroblast growth factor 21 (Fgf21).